A 98-amino-acid polypeptide reads, in one-letter code: Protein Asterix (98 aa).

2 helical membrane-spanning segments follow: residues 32-52 (LFSI…CLWV) and 78-98 (VSLS…NLFV).

The protein belongs to the Asterix family.

The protein localises to the membrane. The protein is Protein Asterix of Dictyostelium discoideum (Social amoeba).